The sequence spans 73 residues: Cell division protein ZapB (73 aa).

A coiled-coil region spans residues 3–69 (LELLSKLETK…EKVTGLVGLL (67 aa)). Positions 30 to 50 (EKQKSSTLSEHNQQLNEQNQQ) are disordered. Residues 41-50 (NQQLNEQNQQ) are compositionally biased toward low complexity.

It belongs to the ZapB family. In terms of assembly, homodimer. The ends of the coiled-coil dimer bind to each other, forming polymers. Interacts with FtsZ.

It is found in the cytoplasm. In terms of biological role, non-essential, abundant cell division factor that is required for proper Z-ring formation. It is recruited early to the divisome by direct interaction with FtsZ, stimulating Z-ring assembly and thereby promoting cell division earlier in the cell cycle. Its recruitment to the Z-ring requires functional FtsA or ZipA. The protein is Cell division protein ZapB of Shewanella putrefaciens (strain CN-32 / ATCC BAA-453).